Here is a 577-residue protein sequence, read N- to C-terminus: MKFHPTRPFGLYFEFFIIISFFFTSESTGDVESFMKYSNVAFSEGLAGFDSLAHVYQALLKKSTCYQEVAATLISKCSLLNTELTIDNRIHSAIQMTLCDFERSQILAPSECVRGSQSECVSKLESTSTWWLSFTSHFHDVNHLCRLANLEMQKELSIEVNMNVTLVQKQFLEMVILHLRNFESVTDKMNQRIDKFDGKFNSVIENSFKDINFRVNQEIMGLVELQNHQQEGMVQQKEILSTIKQLKSEIFDINSFFANFIEESAGYSNSLIEKLNEKFTSENAIALSAIGKYTSEFSAFMEKRIKNLITTTEDSLQQSVQSNIDFVNSGFQPLYDLTIQLKEELQSLKRLSSEQQNLQHEQILQWKSDFLNVSKDHLKVLQQLRPLIDIVEKFMNVYFKGLSNIISSFAFIGFTLFATLSSLFFKVLKIHRRPIIVFGSLSIIFIHIYCFKITSWVNLYGWITCTIARTLSFIKLNIRTFYLTAFLCALLNFLRYLKYRNSKKDTELSLFLPAPEECNIYHNEHIQVQEDNYLCPIENSLIDLFGSENNKEKLGKQENVRFAFLNSESLEQSPWWD.

An N-terminal signal peptide occupies residues Met-1–Gly-29. The Lumenal portion of the chain corresponds to Asp-30–Asn-404. N-linked (GlcNAc...) asparagine glycans are attached at residues Asn-163 and Asn-372. Residues Ile-405 to Phe-425 form a helical membrane-spanning segment. Residues Lys-426–Arg-433 lie on the Cytoplasmic side of the membrane. The helical transmembrane segment at Pro-434–Thr-454 threads the bilayer. At Ser-455–Thr-470 the chain is on the lumenal side. Residues Leu-471–Leu-491 form a helical membrane-spanning segment. The Cytoplasmic segment spans residues Asn-492–Asp-577.

Belongs to the KAR5 family. In terms of processing, N-glycosylated.

It localises to the endoplasmic reticulum membrane. The protein resides in the nucleus membrane. In terms of biological role, required for nuclear membrane fusion during karyogamy. The protein is Nuclear fusion protein tht1 (tht1) of Schizosaccharomyces pombe (strain 972 / ATCC 24843) (Fission yeast).